The chain runs to 141 residues: Nucleoside diphosphate kinase (141 aa).

Positions 11, 59, 87, 93, 104, and 114 each coordinate ATP. Residue histidine 117 is the Pros-phosphohistidine intermediate of the active site.

The protein belongs to the NDK family. In terms of assembly, homotetramer. Mg(2+) serves as cofactor.

The protein resides in the cytoplasm. It catalyses the reaction a 2'-deoxyribonucleoside 5'-diphosphate + ATP = a 2'-deoxyribonucleoside 5'-triphosphate + ADP. The catalysed reaction is a ribonucleoside 5'-diphosphate + ATP = a ribonucleoside 5'-triphosphate + ADP. Major role in the synthesis of nucleoside triphosphates other than ATP. The ATP gamma phosphate is transferred to the NDP beta phosphate via a ping-pong mechanism, using a phosphorylated active-site intermediate. This is Nucleoside diphosphate kinase from Haemophilus influenzae (strain ATCC 51907 / DSM 11121 / KW20 / Rd).